The chain runs to 208 residues: Protein GrpE (208 aa).

Basic and acidic residues predominate over residues 1–27; sequence MERMNQSRKVPIHDAAEESSAEAHETQ. The tract at residues 1-65 is disordered; sequence MERMNQSRKV…AEEAQEEEAA (65 aa). The segment covering 45–64 has biased composition (acidic residues); that stretch reads MAEEAVEQAQDAEEAQEEEA.

The protein belongs to the GrpE family. As to quaternary structure, homodimer.

The protein resides in the cytoplasm. Its function is as follows. Participates actively in the response to hyperosmotic and heat shock by preventing the aggregation of stress-denatured proteins, in association with DnaK and GrpE. It is the nucleotide exchange factor for DnaK and may function as a thermosensor. Unfolded proteins bind initially to DnaJ; upon interaction with the DnaJ-bound protein, DnaK hydrolyzes its bound ATP, resulting in the formation of a stable complex. GrpE releases ADP from DnaK; ATP binding to DnaK triggers the release of the substrate protein, thus completing the reaction cycle. Several rounds of ATP-dependent interactions between DnaJ, DnaK and GrpE are required for fully efficient folding. This Desulfatibacillum aliphaticivorans protein is Protein GrpE.